A 606-amino-acid chain; its full sequence is Vitamin B12 transporter BtuB (606 aa).

A signal peptide spans Met1 to Ala22. The short motif at Asp29–Asn36 is the TonB box element. Positions Pro41–Thr153 constitute a TBDR plug domain. Residues Ser158–Phe606 form the TBDR beta-barrel domain. Residues Leu589–Phe606 carry the TonB C-terminal box motif.

The protein belongs to the TonB-dependent receptor family. BtuB (TC 1.B.14.3.1) subfamily.

It localises to the cell outer membrane. Functionally, involved in the active translocation of vitamin B12 (cyanocobalamin) across the outer membrane to the periplasmic space. It derives its energy for transport by interacting with the trans-periplasmic membrane protein TonB. This Vibrio vulnificus (strain CMCP6) protein is Vitamin B12 transporter BtuB.